Consider the following 224-residue polypeptide: MHGTDSSSDTPGQPAPSRAELLSAHAEGSISEDTILKTARDRAVDIGVGAVTPAVGALLSMLAKLSGGKAVAEVGTGAGVSGLWLLSGMSDDGVLTTIDIEPEHLRVAKQAFTEAGIGPSRTRLISGRAQEVLTRLADDSYDLVFVDADPIDQPDYVVEGVRLLRSGGVIVVHRAALGDRAGDPAVRDAEVTAVREAARLIAEDERLTPALVPLGDGVLAAVRD.

Positions 1–11 (MHGTDSSSDTP) are enriched in polar residues. The interval 1-20 (MHGTDSSSDTPGQPAPSRAE) is disordered. S-adenosyl-L-methionine-binding positions include Val51, Glu73, 75-76 (GT), Ser81, Asp99, and Ile100. Asp147 serves as a coordination point for substrate. Residue Asp149 coordinates S-adenosyl-L-methionine.

It belongs to the class I-like SAM-binding methyltransferase superfamily. Cation-dependent O-methyltransferase family.

This chain is Putative O-methyltransferase MUL_4520, found in Mycobacterium ulcerans (strain Agy99).